We begin with the raw amino-acid sequence, 180 residues long: Large ribosomal subunit protein uL5 (180 aa).

It belongs to the universal ribosomal protein uL5 family. In terms of assembly, part of the 50S ribosomal subunit; part of the 5S rRNA/L5/L18/L25 subcomplex. Contacts the 5S rRNA and the P site tRNA. Forms a bridge to the 30S subunit in the 70S ribosome.

This is one of the proteins that bind and probably mediate the attachment of the 5S RNA into the large ribosomal subunit, where it forms part of the central protuberance. In the 70S ribosome it contacts protein S13 of the 30S subunit (bridge B1b), connecting the 2 subunits; this bridge is implicated in subunit movement. Contacts the P site tRNA; the 5S rRNA and some of its associated proteins might help stabilize positioning of ribosome-bound tRNAs. This is Large ribosomal subunit protein uL5 from Stenotrophomonas maltophilia (strain K279a).